The following is a 252-amino-acid chain: ATP synthase subunit a (252 aa).

Transmembrane regions (helical) follow at residues 29–49 (FTNV…FLFI), 87–107 (FFPL…IGLF), 117–137 (IMIT…YGFY), 146–166 (LFVP…IEII), 196–216 (FIVS…LPLI), and 219–239 (VAIT…FTVL).

This sequence belongs to the ATPase A chain family. As to quaternary structure, F-type ATPases have 2 components, CF(1) - the catalytic core - and CF(0) - the membrane proton channel. CF(1) has five subunits: alpha(3), beta(3), gamma(1), delta(1), epsilon(1). CF(0) has three main subunits: a(1), b(2) and c(9-12). The alpha and beta chains form an alternating ring which encloses part of the gamma chain. CF(1) is attached to CF(0) by a central stalk formed by the gamma and epsilon chains, while a peripheral stalk is formed by the delta and b chains.

It localises to the cell inner membrane. In terms of biological role, key component of the proton channel; it plays a direct role in the translocation of protons across the membrane. The protein is ATP synthase subunit a of Bartonella tribocorum (strain CIP 105476 / IBS 506).